Reading from the N-terminus, the 327-residue chain is MIDVSGKIRAWGRWLLVGAAATLPSLISLAGGAATASAFSRPGLPVEYLQVPSEAMGRSIKVQFQNGGNGSPAVYLLDGLRAQDDYNGWDINTSAFEWYYQSGLSVVMPVGGQSSFYSDWYSPACGKAGCTTYKWETFLTSELPKWLSANRSVKSTGSAVVGLSMAGSSALILAAYHPDQFIYAGSLSALMDSSQGIEPQLIGLAMGDAGGYKAADMWGPPNDPAWQRNDPILQAGKLVANNTHLWVYCGNGTPSELGGTNVPAEFLENFVHGSNLKFQDAYNGAGGHNAVFNLNADGTHSWEYWGAQLNAMKPDLQNTLMAVPRSG.

The N-terminal stretch at 1 to 38 (MIDVSGKIRAWGRWLLVGAAATLPSLISLAGGAATASA) is a signal peptide. 80 to 81 (LR) is a substrate binding site. Residues 96-106 (FEWYYQSGLSV) form a fibronectin-binding region. Cys125 and Cys130 form a disulfide bridge. Positions 164 and 192 each coordinate substrate. Catalysis depends on Ser164, which acts as the Nucleophile. Glu268 is an active-site residue. Substrate contacts are provided by residues 270–273 (FVHG), Lys277, and 300–302 (HSW). The active site involves His300.

Belongs to the mycobacterial A85 antigen family.

The protein resides in the secreted. The enzyme catalyses 2 alpha,alpha'-trehalose 6-mycolate = alpha,alpha'-trehalose 6,6'-bismycolate + alpha,alpha-trehalose. It catalyses the reaction an acyl-CoA + a 1,2-diacyl-sn-glycerol = a triacyl-sn-glycerol + CoA. Its function is as follows. The antigen 85 proteins (FbpA, FbpB, FbpC) are responsible for the high affinity of mycobacteria for fibronectin, a large adhesive glycoprotein, which facilitates the attachment of M.tuberculosis to murine alveolar macrophages (AMs). They also help to maintain the integrity of the cell wall by catalyzing the transfer of mycolic acids to cell wall arabinogalactan and through the synthesis of alpha,alpha-trehalose dimycolate (TDM, cord factor). They catalyze the transfer of a mycoloyl residue from one molecule of alpha,alpha-trehalose monomycolate (TMM) to another TMM, leading to the formation of TDM. The polypeptide is Diacylglycerol acyltransferase/mycolyltransferase Ag85B (fbpB) (Mycobacterium leprae (strain TN)).